We begin with the raw amino-acid sequence, 1398 residues long: DNA-directed RNA polymerase subunit beta' (1398 aa).

The Zn(2+) site is built by Cys-71, Cys-73, Cys-86, and Cys-89. Positions 462, 464, and 466 each coordinate Mg(2+). Zn(2+)-binding residues include Cys-810, Cys-884, Cys-891, and Cys-894.

It belongs to the RNA polymerase beta' chain family. As to quaternary structure, the RNAP catalytic core consists of 2 alpha, 1 beta, 1 beta' and 1 omega subunit. When a sigma factor is associated with the core the holoenzyme is formed, which can initiate transcription. The cofactor is Mg(2+). Requires Zn(2+) as cofactor.

It carries out the reaction RNA(n) + a ribonucleoside 5'-triphosphate = RNA(n+1) + diphosphate. Functionally, DNA-dependent RNA polymerase catalyzes the transcription of DNA into RNA using the four ribonucleoside triphosphates as substrates. The protein is DNA-directed RNA polymerase subunit beta' of Mesorhizobium japonicum (strain LMG 29417 / CECT 9101 / MAFF 303099) (Mesorhizobium loti (strain MAFF 303099)).